Here is a 343-residue protein sequence, read N- to C-terminus: Phosphoribosylformylglycinamidine cyclo-ligase (343 aa).

It belongs to the AIR synthase family.

Its subcellular location is the cytoplasm. It catalyses the reaction 2-formamido-N(1)-(5-O-phospho-beta-D-ribosyl)acetamidine + ATP = 5-amino-1-(5-phospho-beta-D-ribosyl)imidazole + ADP + phosphate + H(+). It participates in purine metabolism; IMP biosynthesis via de novo pathway; 5-amino-1-(5-phospho-D-ribosyl)imidazole from N(2)-formyl-N(1)-(5-phospho-D-ribosyl)glycinamide: step 2/2. This is Phosphoribosylformylglycinamidine cyclo-ligase from Enterococcus faecalis (strain ATCC 700802 / V583).